The sequence spans 182 residues: RNA pyrophosphohydrolase (182 aa).

Residues 6-149 (GYRPNVGIIL…KRLVYEQALN (144 aa)) form the Nudix hydrolase domain. Residues 38–59 (GGIKRGETPEEAMFRELYEEVG) carry the Nudix box motif. The disordered stretch occupies residues 162-182 (PRHKKEQEPFSDVVDSVRSEE).

Belongs to the Nudix hydrolase family. RppH subfamily. The cofactor is a divalent metal cation.

Its function is as follows. Accelerates the degradation of transcripts by removing pyrophosphate from the 5'-end of triphosphorylated RNA, leading to a more labile monophosphorylated state that can stimulate subsequent ribonuclease cleavage. The protein is RNA pyrophosphohydrolase of Dechloromonas aromatica (strain RCB).